We begin with the raw amino-acid sequence, 1659 residues long: Intersectin-2 (1659 aa).

Residues 22 to 110 (ERTKHDKQFD…PIMKQPPMFS (89 aa)) form the EH 1 domain. In terms of domain architecture, EF-hand 1 spans 54-89 (LPAPVLAEIWALSDLNKDGKMDQQEFSIAMKLIKLK). 5 residues coordinate Ca(2+): Asp67, Asn69, Asp71, Lys73, and Glu78. 3 positions are modified to phosphoserine: Ser110, Ser211, and Ser231. Over residues 220 to 231 (STSSTASLSGNS) the composition is skewed to low complexity. A disordered region spans residues 220–242 (STSSTASLSGNSPKTGTSEWAVP). The 90-residue stretch at 245–334 (SRLKYRQKFN…PELVPPSFRG (90 aa)) folds into the EH 2 domain. The region spanning 278 to 313 (LSQTQLATIWTLADIDGDGQLKAEEFILAMHLTDMA) is the EF-hand 2 domain. Residues 335-382 (GKQVDSVNGTLPSYQKTQEEEPQKKLPVTFEDKRKANYERGNMELEKR) are disordered. The span at 339 to 350 (DSVNGTLPSYQK) shows a compositional bias: polar residues. Residues 351–382 (TQEEEPQKKLPVTFEDKRKANYERGNMELEKR) are compositionally biased toward basic and acidic residues. The stretch at 365–717 (EDKRKANYER…KAEAKQSETA (353 aa)) forms a coiled coil. Residue Tyr554 is modified to Phosphotyrosine. Phosphothreonine is present on Thr574. Positions 689–713 (KQKRLQEEKSQDKTQEEERKAEAKQ) are enriched in basic and acidic residues. A disordered region spans residues 689–715 (KQKRLQEEKSQDKTQEEERKAEAKQSE). The 62-residue stretch at 718-779 (SALVNYRALY…PCNYVEKVLS (62 aa)) folds into the SH3 1 domain. Thr836 carries the phosphothreonine modification. Phosphoserine occurs at positions 838 and 843. The SH3 2 domain maps to 852 to 910 (VENLKAQALCSWTAKKENHLNFSKHDVITVLEQQENWWFGEVHGGRGWFPKSYVKLIPG). Tyr922 carries the phosphotyrosine modification. SH3 domains are found at residues 942–1000 (PVGE…PKDQ), 1014–1078 (KKPE…LLGP), and 1088–1147 (HAVC…MTTD). The 188-residue stretch at 1170-1357 (KRQGYIHELI…EELCSQVNEG (188 aa)) folds into the DH domain. The PH domain occupies 1396–1506 (KLLHSGKLYK…WVQKIKGASE (111 aa)). The 117-residue stretch at 1514 to 1630 (KKREKAYQAR…RTEQESKGPT (117 aa)) folds into the C2 domain. Ca(2+)-binding residues include Asp1602, Ser1605, and Asp1608.

Belongs to a complex that may contain multimers of ITSN1, ITSN2 and EPS15, and different partners according to the step in the endocytic process. Interacts with ADAM15. Interacts with FASLG. Interacts with ANKRD54. Interacts with FCHO2. It depends on Ca(2+) as a cofactor. Widely expressed in adult tissues.

Its subcellular location is the cytoplasm. Its function is as follows. Adapter protein that may provide indirect link between the endocytic membrane traffic and the actin assembly machinery. May regulate the formation of clathrin-coated vesicles (CCPs). Seems to be involved in CCPs maturation including invagination or budding. Involved in endocytosis of integrin beta-1 (ITGB1) and transferrin receptor (TFR). Plays a role in dendrite formation by melanocytes. The protein is Intersectin-2 (Itsn2) of Mus musculus (Mouse).